The primary structure comprises 405 residues: uncharacterized protein (405 aa).

Residues 1–18 (MPEPVAEPALNGLRLNLR) are Cytoplasmic-facing. The chain crosses the membrane as a helical span at residues 19 to 39 (IVSIVMFNFASYLTIGLPLAV). Over 40-46 (LPGYVHD) the chain is Periplasmic. The helical transmembrane segment at 47–67 (VMGFSAFWAGLVISLQYFATL) threads the bilayer. The Cytoplasmic segment spans residues 68-84 (LSRPHAGRYADSLGPKK). Residues 85–105 (IVVFGLCGCFLSGLGYLTAGL) form a helical membrane-spanning segment. Position 106 (T106) is a topological domain, periplasmic. A helical transmembrane segment spans residues 107-127 (ASLPVISLLLLCLGRVILGIG). Over 128–155 (QSFAGTGSTLWGVGVVGSLHIGRVISWN) the chain is Cytoplasmic. Residues 156-176 (GIVTYGAMAMGAPLGVVFYHW) traverse the membrane as a helical segment. Position 177 (G177) is a topological domain, periplasmic. The chain crosses the membrane as a helical span at residues 178-198 (GLQALALIIMGVALVAILLAI). The Cytoplasmic segment spans residues 199–223 (PRPTVKASKGKPLPFRAVLGRVWLY). The chain crosses the membrane as a helical span at residues 224–244 (GMALALASAGFGVIATFITLF). At 245–251 (YDAKGWD) the chain is on the periplasmic side. Residues 252 to 272 (GAAFALTLFSCAFVGTRLLFP) traverse the membrane as a helical segment. Residues 273-282 (NGINRIGGLN) are Cytoplasmic-facing. A helical transmembrane segment spans residues 283–303 (VAMICFSVEIIGLLLVGVATM). Topologically, residues 304–308 (PWMAK) are periplasmic. A helical membrane pass occupies residues 309–329 (IGVLLAGAGFSLVFPALGVVA). Over 330-343 (VKAVPQQNQGAALA) the chain is Cytoplasmic. The helical transmembrane segment at 344 to 364 (TYTVFMDLSLGVTGPLAGLVM) threads the bilayer. Position 365 (S365) is a topological domain, periplasmic. The chain crosses the membrane as a helical span at residues 366–386 (WAGVPVIYLAAAGLVAIALLL). The Cytoplasmic segment spans residues 387–405 (TWRLKKRPPEHVPEAASSS).

This sequence belongs to the major facilitator superfamily. YhhS family.

The protein resides in the cell inner membrane. Confers high-level resistance to glyphosate when overexpressed. Overexpression has no effect on intracellular arabinose concentrations. This is an uncharacterized protein from Escherichia coli (strain K12).